A 269-amino-acid polypeptide reads, in one-letter code: Type 4 prepilin-like proteins leader peptide-processing enzyme (269 aa).

Transmembrane regions (helical) follow at residues M13 to W33, Y102 to E122, G124 to L144, Q147 to A167, V178 to V198, L210 to I230, and L249 to F269.

It belongs to the peptidase A24 family.

It is found in the cell inner membrane. The enzyme catalyses Typically cleaves a -Gly-|-Phe- bond to release an N-terminal, basic peptide of 5-8 residues from type IV prepilin, and then N-methylates the new N-terminal amino group, the methyl donor being S-adenosyl-L-methionine.. In terms of biological role, cleaves type-4 fimbrial leader sequence and methylates the N-terminal (generally Phe) residue. The sequence is that of Type 4 prepilin-like proteins leader peptide-processing enzyme from Escherichia coli O78:H11 (strain H10407 / ETEC).